We begin with the raw amino-acid sequence, 272 residues long: Acyl-[acyl-carrier-protein]--UDP-N-acetylglucosamine O-acyltransferase (272 aa).

Belongs to the transferase hexapeptide repeat family. LpxA subfamily. As to quaternary structure, homotrimer.

Its subcellular location is the cytoplasm. The catalysed reaction is a (3R)-hydroxyacyl-[ACP] + UDP-N-acetyl-alpha-D-glucosamine = a UDP-3-O-[(3R)-3-hydroxyacyl]-N-acetyl-alpha-D-glucosamine + holo-[ACP]. It participates in glycolipid biosynthesis; lipid IV(A) biosynthesis; lipid IV(A) from (3R)-3-hydroxytetradecanoyl-[acyl-carrier-protein] and UDP-N-acetyl-alpha-D-glucosamine: step 1/6. Involved in the biosynthesis of lipid A, a phosphorylated glycolipid that anchors the lipopolysaccharide to the outer membrane of the cell. This Rhizobium etli (strain ATCC 51251 / DSM 11541 / JCM 21823 / NBRC 15573 / CFN 42) protein is Acyl-[acyl-carrier-protein]--UDP-N-acetylglucosamine O-acyltransferase.